The following is a 129-amino-acid chain: V-type proton ATPase subunit F 2 (129 aa).

The protein belongs to the V-ATPase F subunit family. V-ATPase is a heteromultimeric enzyme made up of two complexes: the ATP-hydrolytic V1 complex and the proton translocation V0 complex. The V1 complex consists of three catalytic AB heterodimers that form a heterohexamer, three peripheral stalks each consisting of EG heterodimers, one central rotor including subunits D and F, and the regulatory subunits C and H. The proton translocation complex V0 consists of the proton transport subunit a, a ring of proteolipid subunits c9c'', rotary subunit d, subunits e and f, and the accessory subunits VhaAC45 and ATP6AP2.

In terms of biological role, subunit of the V1 complex of vacuolar(H+)-ATPase (V-ATPase), a multisubunit enzyme composed of a peripheral complex (V1) that hydrolyzes ATP and a membrane integral complex (V0) that translocates protons. V-ATPase is responsible for acidifying and maintaining the pH of intracellular compartments and in some cell types, is targeted to the plasma membrane, where it is responsible for acidifying the extracellular environment. The sequence is that of V-type proton ATPase subunit F 2 (Vha14-2) from Drosophila melanogaster (Fruit fly).